The primary structure comprises 637 residues: Multicopper oxidase LPR1 homolog 5 (637 aa).

The N-terminal stretch at 1–21 is a signal peptide; that stretch reads MSPRIQQLAAVLLAAVVVVAA. The N-linked (GlcNAc...) asparagine glycan is linked to Asn-100. Cu cation is bound by residues His-209 and His-211. Asn-234 carries N-linked (GlcNAc...) asparagine glycosylation. Cu cation-binding residues include His-257 and His-259. N-linked (GlcNAc...) asparagine glycans are attached at residues Asn-308, Asn-349, Asn-357, Asn-425, Asn-482, and Asn-516. In terms of domain architecture, Plastocyanin-like spans 334–406; it reads PYLSVQRRRY…IVDFSRLPAA (73 aa). Positions 522, 525, and 527 each coordinate Cu cation. Asn-553 is a glycosylation site (N-linked (GlcNAc...) asparagine). Cu cation-binding residues include His-618, Cys-619, His-620, His-624, and Met-629.

This sequence belongs to the multicopper oxidase family. Requires Cu cation as cofactor. As to expression, highly expressed in roots and basal stems.

It localises to the endoplasmic reticulum membrane. In terms of biological role, multicopper oxidase that may play a role in the maintenance of inorganic phosphate homeostasis. The protein is Multicopper oxidase LPR1 homolog 5 of Oryza sativa subsp. japonica (Rice).